Here is a 199-residue protein sequence, read N- to C-terminus: NAD(P)H dehydrogenase (quinone) (199 aa).

The Flavodoxin-like domain maps to 4-190; sequence MLVLYYSAYG…DGARFQGRRV (187 aa). Residues 10–15 and 78–80 contribute to the FMN site; these read SAYGYM and TRY. Tyr12 serves as a coordination point for NAD(+). Trp98 serves as a coordination point for substrate. FMN-binding positions include 113–119 and His134; that span reads STATQHG. The tract at residues 158–181 is disordered; that stretch reads GAPYGMTTTADGDGSRQPSAQELD. The span at 163-177 shows a compositional bias: polar residues; it reads MTTTADGDGSRQPSA.

The protein belongs to the WrbA family. FMN serves as cofactor.

It carries out the reaction a quinone + NADH + H(+) = a quinol + NAD(+). The catalysed reaction is a quinone + NADPH + H(+) = a quinol + NADP(+). In Brucella abortus (strain S19), this protein is NAD(P)H dehydrogenase (quinone).